Reading from the N-terminus, the 464-residue chain is E3 ubiquitin-protein ligase RNF38 (464 aa).

The interval 1–94 is disordered; it reads MRESEDSPSP…NSISQDENYH (94 aa). The Bipartite nuclear localization signal 1 signature appears at 6–20; sequence DSPSPKRQRLSHSVF. Over residues 38–53 the composition is skewed to polar residues; it reads MTSNRQPPSVRPNQHH. The short motif at 64–79 is the Bipartite nuclear localization signal 2 element; the sequence is RNRRSPPVRRQRGRRE. A compositionally biased stretch (basic residues) spans 64 to 83; that stretch reads RNRRSPPVRRQRGRRERLSR. Residues 412 to 453 form an RING-type zinc finger; it reads CVVCMCDFESRQLLRVLPCNHEFHAKCVDKWLKGNRTCPICR.

Its subcellular location is the nucleus. It carries out the reaction S-ubiquitinyl-[E2 ubiquitin-conjugating enzyme]-L-cysteine + [acceptor protein]-L-lysine = [E2 ubiquitin-conjugating enzyme]-L-cysteine + N(6)-ubiquitinyl-[acceptor protein]-L-lysine.. The protein operates within protein modification; protein ubiquitination. Acts as an E3 ubiquitin-protein ligase able to ubiquitinate p53/TP53 which promotes its relocalization to discrete foci associated with PML nuclear bodies. Exhibits preference for UBE2D2 as a E2 enzyme. The chain is E3 ubiquitin-protein ligase RNF38 from Mus musculus (Mouse).